The following is a 591-amino-acid chain: DEAD-box ATP-dependent RNA helicase 17 (591 aa).

Residues 23–52 carry the Q motif motif; it reads CSFTDLGLHPTLCAHLQDKMGFQAPTRIQA. One can recognise a Helicase ATP-binding domain in the interval 55–248; it reads IPVAMSGQHM…KISLKNPVMI (194 aa). 68–75 contributes to the ATP binding site; sequence AATGTGKT. Positions 181–184 match the DEAD box motif; the sequence is DEAD. Residues 293–482 form the Helicase C-terminal domain; that stretch reads QLVQRYVKVS…SFPVNGQRLH (190 aa). A disordered region spans residues 562 to 591; the sequence is GRSHQVQLKKRKKEQKRERPAKRRKIPAKR. Over residues 568-591 the composition is skewed to basic residues; that stretch reads QLKKRKKEQKRERPAKRRKIPAKR.

It belongs to the DEAD box helicase family. DDX31/DBP7 subfamily. As to expression, expressed in flowers and pollen grains.

The protein resides in the nucleus. It carries out the reaction ATP + H2O = ADP + phosphate + H(+). Its function is as follows. May play a role in organellar ribosome biogenesis and suppress 16S rRNA maturation. The chain is DEAD-box ATP-dependent RNA helicase 17 from Oryza sativa subsp. japonica (Rice).